The following is a 66-amino-acid chain: Large ribosomal subunit protein bL35 (66 aa).

The protein belongs to the bacterial ribosomal protein bL35 family.

The sequence is that of Large ribosomal subunit protein bL35 from Thermodesulfovibrio yellowstonii (strain ATCC 51303 / DSM 11347 / YP87).